Reading from the N-terminus, the 299-residue chain is Ribosomal protein L11 methyltransferase (299 aa).

S-adenosyl-L-methionine-binding residues include Thr150, Gly171, Asp193, and Asn234.

Belongs to the methyltransferase superfamily. PrmA family.

It is found in the cytoplasm. The catalysed reaction is L-lysyl-[protein] + 3 S-adenosyl-L-methionine = N(6),N(6),N(6)-trimethyl-L-lysyl-[protein] + 3 S-adenosyl-L-homocysteine + 3 H(+). Methylates ribosomal protein L11. The polypeptide is Ribosomal protein L11 methyltransferase (Dictyoglomus turgidum (strain DSM 6724 / Z-1310)).